The sequence spans 50 residues: Insulin (50 aa).

3 disulfide bridges follow: Cys7–Cys36, Cys19–Cys49, and Cys35–Cys40.

It belongs to the insulin family. In terms of assembly, heterodimer of a B chain and an A chain linked by two disulfide bonds.

The protein resides in the secreted. Functionally, insulin decreases blood glucose concentration. It increases cell permeability to monosaccharides, amino acids and fatty acids. It accelerates glycolysis, the pentose phosphate cycle, and glycogen synthesis in liver. This Myoxocephalus scorpius (Shorthorn sculpin) protein is Insulin (ins).